We begin with the raw amino-acid sequence, 236 residues long: Potassium/proton antiporter CemA (236 aa).

Transmembrane regions (helical) follow at residues Tyr-18–Leu-38, Ile-114–Ala-134, Leu-161–Ile-181, and Phe-196–Ile-216.

Belongs to the CemA family.

It is found in the plastid. The protein resides in the chloroplast inner membrane. The catalysed reaction is K(+)(in) + H(+)(out) = K(+)(out) + H(+)(in). Its function is as follows. Contributes to K(+)/H(+) antiport activity by supporting proton efflux to control proton extrusion and homeostasis in chloroplasts in a light-dependent manner to modulate photosynthesis. Prevents excessive induction of non-photochemical quenching (NPQ) under continuous-light conditions. Indirectly promotes efficient inorganic carbon uptake into chloroplasts. This chain is Potassium/proton antiporter CemA, found in Mesostigma viride (Green alga).